Here is a 469-residue protein sequence, read N- to C-terminus: UDP-N-acetylmuramate--L-alanine ligase (469 aa).

122-128 provides a ligand contact to ATP; it reads GTHGKTT.

It belongs to the MurCDEF family.

The protein localises to the cytoplasm. It carries out the reaction UDP-N-acetyl-alpha-D-muramate + L-alanine + ATP = UDP-N-acetyl-alpha-D-muramoyl-L-alanine + ADP + phosphate + H(+). The protein operates within cell wall biogenesis; peptidoglycan biosynthesis. In terms of biological role, cell wall formation. This Legionella pneumophila subsp. pneumophila (strain Philadelphia 1 / ATCC 33152 / DSM 7513) protein is UDP-N-acetylmuramate--L-alanine ligase.